Reading from the N-terminus, the 377-residue chain is MHVSHLQLADYRSYEAAYLELEPGVSTFIGPNGQGKTNLVEAIGYVATHSSHRVAHDAPLVRRGAQRAVIRAAVVRHGQTALIELEINPGRANRARLNRSPNTRMRDVLGILHTVLFAPEDLALVKGDPGERRRFLDELLTARAPRYAGVRSDYERVLKQRNALLKSAAAQNLHHRGGRDLPTLDVWDEHLAQIGAELLAARLALVAELQPLAAKAYGELTATQDPISLRYRCSATDEELDTTNRPQLVEILRAALLRARPDELRRGVSLVGPHRDDLQLWLNDLPAKGYASQGESWSYALALRLAGFELLRADGDDPVLLLDDVFAELDAERRRRLASYVRTAEQVLVTAAVPDDVPQELSGARFRVTGGSVERER.

Position 30 to 37 (30 to 37) interacts with ATP; sequence GPNGQGKT.

The protein belongs to the RecF family.

It is found in the cytoplasm. Its function is as follows. The RecF protein is involved in DNA metabolism; it is required for DNA replication and normal SOS inducibility. RecF binds preferentially to single-stranded, linear DNA. It also seems to bind ATP. In Thermobifida fusca (strain YX), this protein is DNA replication and repair protein RecF.